A 602-amino-acid chain; its full sequence is Elongation factor 4 (602 aa).

Residues 7 to 189 (RNIRNFSIIA…AIVQRIPAPQ (183 aa)) enclose the tr-type G domain. GTP-binding positions include 19–24 (DHGKST) and 136–139 (NKID).

This sequence belongs to the TRAFAC class translation factor GTPase superfamily. Classic translation factor GTPase family. LepA subfamily.

The protein resides in the cell inner membrane. It catalyses the reaction GTP + H2O = GDP + phosphate + H(+). Required for accurate and efficient protein synthesis under certain stress conditions. May act as a fidelity factor of the translation reaction, by catalyzing a one-codon backward translocation of tRNAs on improperly translocated ribosomes. Back-translocation proceeds from a post-translocation (POST) complex to a pre-translocation (PRE) complex, thus giving elongation factor G a second chance to translocate the tRNAs correctly. Binds to ribosomes in a GTP-dependent manner. This is Elongation factor 4 from Xylella fastidiosa (strain M23).